A 162-amino-acid polypeptide reads, in one-letter code: 2-C-methyl-D-erythritol 2,4-cyclodiphosphate synthase (162 aa).

Asp-8 and His-10 together coordinate a divalent metal cation. 4-CDP-2-C-methyl-D-erythritol 2-phosphate contacts are provided by residues 8-10 (DVH) and 36-37 (HS). Position 44 (His-44) interacts with a divalent metal cation. 4-CDP-2-C-methyl-D-erythritol 2-phosphate contacts are provided by residues 58-60 (DIG), 63-67 (FPDTD), 102-108 (AQAPKMA), 134-137 (TTTE), Phe-141, and Arg-144.

The protein belongs to the IspF family. In terms of assembly, homotrimer. Requires a divalent metal cation as cofactor.

The enzyme catalyses 4-CDP-2-C-methyl-D-erythritol 2-phosphate = 2-C-methyl-D-erythritol 2,4-cyclic diphosphate + CMP. It functions in the pathway isoprenoid biosynthesis; isopentenyl diphosphate biosynthesis via DXP pathway; isopentenyl diphosphate from 1-deoxy-D-xylulose 5-phosphate: step 4/6. Functionally, involved in the biosynthesis of isopentenyl diphosphate (IPP) and dimethylallyl diphosphate (DMAPP), two major building blocks of isoprenoid compounds. Catalyzes the conversion of 4-diphosphocytidyl-2-C-methyl-D-erythritol 2-phosphate (CDP-ME2P) to 2-C-methyl-D-erythritol 2,4-cyclodiphosphate (ME-CPP) with a corresponding release of cytidine 5-monophosphate (CMP). The polypeptide is 2-C-methyl-D-erythritol 2,4-cyclodiphosphate synthase (Yersinia pseudotuberculosis serotype O:1b (strain IP 31758)).